A 336-amino-acid chain; its full sequence is tRNA N6-adenosine threonylcarbamoyltransferase (336 aa).

2 residues coordinate Fe cation: histidine 112 and histidine 116. Substrate is bound by residues 136 to 140 (LVSGG), aspartate 169, glycine 182, and asparagine 276. A Fe cation-binding site is contributed by aspartate 304.

Belongs to the KAE1 / TsaD family. Fe(2+) serves as cofactor.

Its subcellular location is the cytoplasm. It carries out the reaction L-threonylcarbamoyladenylate + adenosine(37) in tRNA = N(6)-L-threonylcarbamoyladenosine(37) in tRNA + AMP + H(+). Functionally, required for the formation of a threonylcarbamoyl group on adenosine at position 37 (t(6)A37) in tRNAs that read codons beginning with adenine. Is involved in the transfer of the threonylcarbamoyl moiety of threonylcarbamoyl-AMP (TC-AMP) to the N6 group of A37, together with TsaE and TsaB. TsaD likely plays a direct catalytic role in this reaction. This is tRNA N6-adenosine threonylcarbamoyltransferase from Francisella tularensis subsp. tularensis (strain FSC 198).